We begin with the raw amino-acid sequence, 276 residues long: Phosphate import ATP-binding protein PstB 2 (276 aa).

The ABC transporter domain maps to 22–262 (MAAVNLTLGF…PKHAETARYV (241 aa)). 54–61 (GPTGSGKT) serves as a coordination point for ATP.

It belongs to the ABC transporter superfamily. Phosphate importer (TC 3.A.1.7) family. The complex is composed of two ATP-binding proteins (PstB), two transmembrane proteins (PstC and PstA) and a solute-binding protein (PstS).

It localises to the cell membrane. It catalyses the reaction phosphate(out) + ATP + H2O = ADP + 2 phosphate(in) + H(+). Functionally, part of the ABC transporter complex PstSACB involved in phosphate import. Responsible for energy coupling to the transport system. In Mycobacterium bovis (strain ATCC BAA-935 / AF2122/97), this protein is Phosphate import ATP-binding protein PstB 2.